A 226-amino-acid chain; its full sequence is Eukaryotic translation initiation factor 3 subunit K (226 aa).

The 159-residue stretch at 42-200 (YNLDANLSLL…QLIVLPRNEF (159 aa)) folds into the PCI domain.

This sequence belongs to the eIF-3 subunit K family. In terms of assembly, component of the eukaryotic translation initiation factor 3 (eIF-3) complex.

Its subcellular location is the cytoplasm. Its function is as follows. Component of the eukaryotic translation initiation factor 3 (eIF-3) complex, which is involved in protein synthesis of a specialized repertoire of mRNAs and, together with other initiation factors, stimulates binding of mRNA and methionyl-tRNAi to the 40S ribosome. The eIF-3 complex specifically targets and initiates translation of a subset of mRNAs involved in cell proliferation. In Oryza sativa subsp. japonica (Rice), this protein is Eukaryotic translation initiation factor 3 subunit K (TIF3K1).